The chain runs to 361 residues: MNKSRVVVGMSGGVDSSVAALLLKQQGYDVIGLFMKNWEDDDTDEYCSSRKDFLDAASVADILDIPLEAVNFSAEYRERVFSLFLAEYQAGRTPNPDVLCNSEIKFKAFLDHALALGADWIATGHYAQVHEINGQFQLLKGEDGNKDQSYFLYRLNQQQLSRTIFPIGHLYKREVRKIAHKHGLPNSTKKDSTGICFIGERPFREFLNRYLPVDPGEIHTLDGQIVGEHQGLMYYTIGQRQGLGIGGIREGSEQPWFVSGKDMQTNVLYVVQGHDHPALLRSSLTAADLSWISGAPPHQSWVYAAKIRYRQTDAPCAIIRLEHDSCQIGFAAPQWGVTPGQSVVIYESKVCLGGGIITDSV.

Residues 9–16 (GMSGGVDS) and M35 contribute to the ATP site. The interaction with target base in tRNA stretch occupies residues 95-97 (NPD). C100 functions as the Nucleophile in the catalytic mechanism. C100 and C196 are disulfide-bonded. G124 provides a ligand contact to ATP. The segment at 146–148 (KDQ) is interaction with tRNA. Catalysis depends on C196, which acts as the Cysteine persulfide intermediate. The segment at 308 to 309 (RY) is interaction with tRNA.

The protein belongs to the MnmA/TRMU family.

Its subcellular location is the cytoplasm. It catalyses the reaction S-sulfanyl-L-cysteinyl-[protein] + uridine(34) in tRNA + AH2 + ATP = 2-thiouridine(34) in tRNA + L-cysteinyl-[protein] + A + AMP + diphosphate + H(+). Functionally, catalyzes the 2-thiolation of uridine at the wobble position (U34) of tRNA, leading to the formation of s(2)U34. In Nitrosomonas eutropha (strain DSM 101675 / C91 / Nm57), this protein is tRNA-specific 2-thiouridylase MnmA.